The sequence spans 288 residues: Probable ketoamine kinase SAOUHSC_02908 (288 aa).

86–88 (TYL) contributes to the ATP binding site. Catalysis depends on Asp-191, which acts as the Proton acceptor.

It belongs to the fructosamine kinase family.

The enzyme catalyses N(6)-(D-ribulosyl)-L-lysine + ATP = N(6)-(3-O-phospho-D-ribulosyl)-L-lysine + ADP + H(+). It carries out the reaction N(6)-(D-erythrulosyl)-L-lysine + ATP = N(6)-(3-O-phospho-D-erythrulosyl)-L-lysine + ADP + H(+). It catalyses the reaction N(6)-D-ribulosyl-L-lysyl-[protein] + ATP = N(6)-(3-O-phospho-D-ribulosyl)-L-lysyl-[protein] + ADP + H(+). The catalysed reaction is N(6)-(D-erythrulosyl)-L-lysyl-[protein] + ATP = N(6)-(3-O-phospho-D-erythrulosyl)-L-lysyl-[protein] + ADP + H(+). In terms of biological role, ketoamine kinase that phosphorylates ketoamines, such as erythruloselysine and ribuloselysine, on the third carbon of the sugar moiety to generate ketoamine 3-phosphate. Has higher activity on free lysine (erythruloselysine and ribuloselysine), than on ribuloselysine and erythruloselysine residues on glycated proteins. In Staphylococcus aureus (strain NCTC 8325 / PS 47), this protein is Probable ketoamine kinase SAOUHSC_02908.